The sequence spans 128 residues: Sirohydrochlorin cobaltochelatase (128 aa).

Residue His9 is the Proton acceptor of the active site. His9 serves as a coordination point for Co(2+). Residues Lys43 and 68-73 (FATGTH) contribute to the substrate site. His73 provides a ligand contact to Co(2+).

This sequence belongs to the CbiX family. CbiXS subfamily. As to quaternary structure, homotetramer; dimer of dimers.

The enzyme catalyses Co-sirohydrochlorin + 2 H(+) = sirohydrochlorin + Co(2+). The protein operates within cofactor biosynthesis; adenosylcobalamin biosynthesis; cob(II)yrinate a,c-diamide from sirohydrochlorin (anaerobic route): step 1/10. Its function is as follows. Catalyzes the insertion of Co(2+) into sirohydrochlorin as part of the anaerobic pathway to cobalamin biosynthesis. This Saccharolobus islandicus (strain Y.G.57.14 / Yellowstone #1) (Sulfolobus islandicus) protein is Sirohydrochlorin cobaltochelatase.